The following is an 849-amino-acid chain: MQICKKNVFLLYYGVLVFLSFQVSSSTDTISTNQPLSGFETIVSSGDIFELGLFTPTPDTYDHRNYYIGMWYRHVSPQTIVWVANRESPLGGDASTYLLKILDGNLILHDNISATRKSHTEGTSRRSPQKISEGNLLFHETVWSTGVNSSMSKDVQAVLFDSGNLVLRDGPNSSAAVLWQSFDHPSDTWLPGGKIRLGSQLFTSWESLIDPSPGRYSLEFDPKLHSLVTVWNRSKSYWSSGPLYDWLQSFKGFPELQGTKLSFTLNMDESYITFSVDPQSRYRLVMGVSGQFMLQVWHVDLQSWRVILSQPDNRCDVYNSCGSFGICNENREPPPCRCVPGFKREFSQGSDDSNDYSGGCKRETYLHCYKRNDEFLPIENMKLATDPTTASVLTSGTFRTCASRCVADCSCQAYANDGNKCLVWTKDAFNLQQLDANKGHTFFLRLASSNISTANNRKTEHSKGKSIVLPLVLASLVATAACFVGLYCCISSRIRRKKKQRDEKHSRELLEGGLIDDAGENMCYLNLHDIMVATNSFSRKKKLGEGGFGPVYKGKLPNGMEVAIKRLSKKSSQGLTEFKNEVVLIIKLQHKNLVRLLGYCVEGDEKLLIYEYMSNKSLDGLLFDSLKSRELDWETRMKIVNGTTRGLQYLHEYSRLRIIHRDLKASNILLDDEMNPKISDFGTARIFGCKQIDDSTQRIVGTFGYMSPEYALGGVISEKSDIYSFGVLLLEIISGKKATRFVHNDQKHSLIAYEWESWCETKGVSIIDEPMCCSYSLEEAMRCIHIALLCVQDHPKDRPMISQIVYMLSNDNTLPIPKQPTFSNVLNGDQQLDYVFSINEATQTELEAR.

The signal sequence occupies residues 1-26 (MQICKKNVFLLYYGVLVFLSFQVSSS). One can recognise a Bulb-type lectin domain in the interval 27 to 180 (TDTISTNQPL…PNSSAAVLWQ (154 aa)). Residues 27–466 (TDTISTNQPL…RKTEHSKGKS (440 aa)) lie on the Extracellular side of the membrane. N-linked (GlcNAc...) asparagine glycosylation is found at Asn-111, Asn-148, Asn-172, and Asn-232. The 38-residue stretch at 311–348 (PDNRCDVYNSCGSFGICNENREPPPCRCVPGFKREFSQ) folds into the EGF-like domain. 4 disulfide bridges follow: Cys-315-Cys-327, Cys-321-Cys-336, Cys-401-Cys-421, and Cys-405-Cys-411. Positions 368-447 (CYKRNDEFLP…KGHTFFLRLA (80 aa)) constitute a PAN domain. The N-linked (GlcNAc...) asparagine glycan is linked to Asn-450. A helical membrane pass occupies residues 467–487 (IVLPLVLASLVATAACFVGLY). The Cytoplasmic portion of the chain corresponds to 488-849 (CCISSRIRRK…EATQTELEAR (362 aa)). The Protein kinase domain occupies 537–822 (FSRKKKLGEG…TLPIPKQPTF (286 aa)). Residues 543–551 (LGEGGFGPV) and Lys-565 each bind ATP. Ser-571 carries the post-translational modification Phosphoserine. The caM-binding stretch occupies residues 626–643 (LKSRELDWETRMKIVNGT). The active-site Proton acceptor is Asp-662. 2 positions are modified to phosphoserine: Ser-666 and Ser-679. Thr-696 carries the phosphothreonine modification. A Phosphoserine modification is found at Ser-837. The residue at position 844 (Thr-844) is a Phosphothreonine.

It belongs to the protein kinase superfamily. Ser/Thr protein kinase family.

It localises to the cell membrane. The enzyme catalyses L-seryl-[protein] + ATP = O-phospho-L-seryl-[protein] + ADP + H(+). It carries out the reaction L-threonyl-[protein] + ATP = O-phospho-L-threonyl-[protein] + ADP + H(+). The polypeptide is G-type lectin S-receptor-like serine/threonine-protein kinase At4g11900 (Arabidopsis thaliana (Mouse-ear cress)).